The chain runs to 545 residues: CTP synthase (545 aa).

Residues 1–266 form an amidoligase domain region; sequence MTTNYIFVTG…DDYICKRFSL (266 aa). Position 14 (serine 14) interacts with CTP. Residue serine 14 coordinates UTP. ATP-binding positions include 15–20 and aspartate 72; that span reads SLGKGI. Residues aspartate 72 and glutamate 140 each coordinate Mg(2+). Residues 147-149, 187-192, and lysine 223 contribute to the CTP site; these read DIE and KTKPTQ. UTP is bound by residues 187-192 and lysine 223; that span reads KTKPTQ. 239-241 contributes to the ATP binding site; that stretch reads KDV. In terms of domain architecture, Glutamine amidotransferase type-1 spans 291–542; it reads TIGMVGKYIE…VKAASEYQKR (252 aa). Position 352 (glycine 352) interacts with L-glutamine. Cysteine 379 acts as the Nucleophile; for glutamine hydrolysis in catalysis. Residues 380–383, glutamate 403, and arginine 470 each bind L-glutamine; that span reads LGMQ. Residues histidine 515 and glutamate 517 contribute to the active site.

Belongs to the CTP synthase family. Homotetramer.

The enzyme catalyses UTP + L-glutamine + ATP + H2O = CTP + L-glutamate + ADP + phosphate + 2 H(+). It catalyses the reaction L-glutamine + H2O = L-glutamate + NH4(+). It carries out the reaction UTP + NH4(+) + ATP = CTP + ADP + phosphate + 2 H(+). Its pathway is pyrimidine metabolism; CTP biosynthesis via de novo pathway; CTP from UDP: step 2/2. Allosterically activated by GTP, when glutamine is the substrate; GTP has no effect on the reaction when ammonia is the substrate. The allosteric effector GTP functions by stabilizing the protein conformation that binds the tetrahedral intermediate(s) formed during glutamine hydrolysis. Inhibited by the product CTP, via allosteric rather than competitive inhibition. In terms of biological role, catalyzes the ATP-dependent amination of UTP to CTP with either L-glutamine or ammonia as the source of nitrogen. Regulates intracellular CTP levels through interactions with the four ribonucleotide triphosphates. The sequence is that of CTP synthase from Klebsiella pneumoniae (strain 342).